The chain runs to 65 residues: Large ribosomal subunit protein uL29 (65 aa).

It belongs to the universal ribosomal protein uL29 family.

The polypeptide is Large ribosomal subunit protein uL29 (Lactobacillus delbrueckii subsp. bulgaricus (strain ATCC 11842 / DSM 20081 / BCRC 10696 / JCM 1002 / NBRC 13953 / NCIMB 11778 / NCTC 12712 / WDCM 00102 / Lb 14)).